The primary structure comprises 174 residues: Disulfide bond formation protein B (174 aa).

The Cytoplasmic segment spans residues 1–12 (MLNWIDTAPRRI). A helical membrane pass occupies residues 13–29 (LALISAACVAMLAFGMY). At 30 to 47 (LQHVVGLEPCPMCIVQRY) the chain is on the periplasmic side. Cys-39 and Cys-42 are oxidised to a cystine. Residues 48 to 64 (ALIGVAVFAGLASARGQ) traverse the membrane as a helical segment. Residues 65 to 69 (KGWWM) lie on the Cytoplasmic side of the membrane. The chain crosses the membrane as a helical span at residues 70 to 87 (TWSVLALVAAGFGAFVAA). At 88 to 143 (RQSWLQWYPPEIATCGRDFYGMIENYPISRAIPMIFRGSGDCTAVDWTFLGGSIAN) the chain is on the periplasmic side. Cysteines 102 and 129 form a disulfide. A helical transmembrane segment spans residues 144 to 162 (WSFVWFLLFAVLLLVLLVR). Over 163–174 (GGRGAPDTLARA) the chain is Cytoplasmic.

Belongs to the DsbB family.

Its subcellular location is the cell inner membrane. In terms of biological role, required for disulfide bond formation in some periplasmic proteins. Acts by oxidizing the DsbA protein. The sequence is that of Disulfide bond formation protein B from Acidovorax sp. (strain JS42).